The primary structure comprises 228 residues: Cytidylate kinase (228 aa).

Residue 17 to 25 (GPSASGKGT) coordinates ATP.

It belongs to the cytidylate kinase family. Type 1 subfamily.

It is found in the cytoplasm. The catalysed reaction is CMP + ATP = CDP + ADP. It carries out the reaction dCMP + ATP = dCDP + ADP. This chain is Cytidylate kinase, found in Paraburkholderia phytofirmans (strain DSM 17436 / LMG 22146 / PsJN) (Burkholderia phytofirmans).